A 95-amino-acid polypeptide reads, in one-letter code: MLRTTVSKLARPTVSRAFATTSRALAGETGAPPKTGGPGDAFQRREKANEDFAIRQREKEKLLELKKKLAEQQKHLKTLSDHIDEITREQGGERN.

The transit peptide at 1-25 directs the protein to the mitochondrion; sequence MLRTTVSKLARPTVSRAFATTSRAL. Disordered regions lie at residues 20 to 48 and 76 to 95; these read TTSR…REKA and LKTL…GERN.

Belongs to the ATPase inhibitor family. In terms of assembly, associates with the mitochondrial small ribosomal subunit (mt-SSU). IF(1) coiled-coil forms a helical bundle with the C-terminal extension of uS17m and also binds to mS27 in the mtSSU tail. Since the C-terminal extension of uS17m stabilizing the IF(1) on the mt-SSU is specific to N.crassa, IF(1) binding might also be specific.

The protein localises to the mitochondrion. Its function is as follows. Endogenous F(1)F(0)-ATPase inhibitor limiting ATP depletion when the mitochondrial membrane potential falls below a threshold and the F(1)F(0)-ATP synthase starts hydrolyzing ATP to pump protons out of the mitochondrial matrix. Required to avoid the consumption of cellular ATP when the F(1)F(0)-ATP synthase enzyme acts as an ATP hydrolase. Functions through inserting its N-terminal part into the catalytically active F1-ATPase, thereby blocking its rotational movement and subsequently the ATP hydrolase activity. In Neurospora crassa (strain ATCC 24698 / 74-OR23-1A / CBS 708.71 / DSM 1257 / FGSC 987), this protein is F(1)-ATPase inhibitor IF(1), mitochondrial (inh1).